Here is a 580-residue protein sequence, read N- to C-terminus: Cytochrome c oxidase subunit 1 (580 aa).

Residues 1-25 (MTAVAPRVDGHVAPQRPEPTGHARK) form a disordered region. A helical membrane pass occupies residues 43–63 (IMYIIMSFSFFFLGGLMALLI). Fe(II)-heme a is bound at residue His87. The next 6 helical transmembrane spans lie at 90–110 (VMLLLYGTPIVWGFANYVLPL), 122–142 (LNAFGFWITTVGGVAMLAGFL), 171–191 (MWIIGVGATGIGSVASAINML), 214–234 (IFVTSVLALLIFPLLLAAALG), 259–279 (LFWFFGHPEVYVLALPFFGII), and 292–312 (FGYIGLVFATLSIGALSMAVW). 2 residues coordinate Cu cation: His265 and Tyr269. Residues 265 to 269 (HPEVY) constitute a cross-link (1'-histidyl-3'-tyrosine (His-Tyr)). Positions 314 and 315 each coordinate Cu cation. The next 2 helical transmembrane spans lie at 316–336 (MFVTGAVLLPFFSFMTFLISV) and 360–380 (MIWAVGFMSTFLFGGLTGIML). His398 lines the heme a3 pocket. 3 helical membrane passes run 399–419 (FHYTLFGTVVFASCAGVYFWF), 434–454 (IHFWLTFVGFHGTFMVQHWLG), and 477–497 (ISTIFSFLLGLSVIPFVWNVF). His400 contributes to the Fe(II)-heme a binding site.

This sequence belongs to the heme-copper respiratory oxidase family. As to quaternary structure, associates with subunits II, III and IV to form cytochrome c oxidase. Requires Cu(2+) as cofactor. The cofactor is heme.

It is found in the cell membrane. It carries out the reaction 4 Fe(II)-[cytochrome c] + O2 + 8 H(+)(in) = 4 Fe(III)-[cytochrome c] + 2 H2O + 4 H(+)(out). The protein operates within energy metabolism; oxidative phosphorylation. Its function is as follows. Cytochrome c oxidase is the component of the respiratory chain that catalyzes the reduction of oxygen to water. Subunits 1-3 form the functional core of the enzyme complex. CO I is the catalytic subunit of the enzyme. Electrons originating in cytochrome c are transferred via the copper A center of subunit 2 and heme A of subunit 1 to the bimetallic center formed by heme A3 and copper B. In Corynebacterium efficiens (strain DSM 44549 / YS-314 / AJ 12310 / JCM 11189 / NBRC 100395), this protein is Cytochrome c oxidase subunit 1 (ctaD).